Consider the following 335-residue polypeptide: Putative serine/threonine-protein kinase 040L (335 aa).

Residues 33-329 (YYYQEFHDEG…DRLTELHHHL (297 aa)) enclose the Protein kinase domain. ATP-binding positions include 39-47 (HDEGGYGSI) and K62. D196 functions as the Proton acceptor in the catalytic mechanism.

The protein belongs to the protein kinase superfamily. Ser/Thr protein kinase family.

In Invertebrate iridescent virus 3 (IIV-3), this protein is Putative serine/threonine-protein kinase 040L.